The chain runs to 725 residues: Polyribonucleotide nucleotidyltransferase (725 aa).

Mg(2+)-binding residues include aspartate 506 and aspartate 512. The KH domain occupies 571-631; sequence PLIEQFAIDP…QNIIDACEHI (61 aa). One can recognise an S1 motif domain in the interval 657–724; it reads DEVVIGKVER…KKDRIELSSA (68 aa).

Belongs to the polyribonucleotide nucleotidyltransferase family. Mg(2+) is required as a cofactor.

The protein localises to the cytoplasm. It carries out the reaction RNA(n+1) + phosphate = RNA(n) + a ribonucleoside 5'-diphosphate. Involved in mRNA degradation. Catalyzes the phosphorolysis of single-stranded polyribonucleotides processively in the 3'- to 5'-direction. This chain is Polyribonucleotide nucleotidyltransferase, found in Aliarcobacter butzleri (strain RM4018) (Arcobacter butzleri).